The following is a 165-amino-acid chain: Phosphopantetheine adenylyltransferase (165 aa).

Ser-10 is a binding site for substrate. ATP-binding positions include 10–11 (SF) and His-18. Positions 42, 79, and 93 each coordinate substrate. Residues 94-96 (GLR), Glu-104, and 129-135 (VRPITAT) contribute to the ATP site.

The protein belongs to the bacterial CoaD family. In terms of assembly, homohexamer. The cofactor is Mg(2+).

The protein localises to the cytoplasm. It carries out the reaction (R)-4'-phosphopantetheine + ATP + H(+) = 3'-dephospho-CoA + diphosphate. The protein operates within cofactor biosynthesis; coenzyme A biosynthesis; CoA from (R)-pantothenate: step 4/5. In terms of biological role, reversibly transfers an adenylyl group from ATP to 4'-phosphopantetheine, yielding dephospho-CoA (dPCoA) and pyrophosphate. This is Phosphopantetheine adenylyltransferase from Rhodopseudomonas palustris (strain BisA53).